A 1113-amino-acid chain; its full sequence is Carbamoyl phosphate synthase arginine-specific large chain (1113 aa).

The tract at residues 23-420 is carboxyphosphate synthetic domain; it reads QLIKGIDSVL…AFQKAFRQVD (398 aa). Arg-150, Arg-190, Gly-196, Gly-197, Lys-227, Leu-229, Glu-234, Gly-260, Ile-261, His-262, Gln-303, and Glu-317 together coordinate ATP. The ATP-grasp 1 domain occupies 154 to 346; the sequence is ARALKEINMP…LAYTAAKIAL (193 aa). Residues Gln-303, Glu-317, and Asn-319 each coordinate Mg(2+). Residues Gln-303, Glu-317, and Asn-319 each coordinate Mn(2+). Residues 421-568 form an oligomerization domain region; it reads PSLLGFQGSD…YVTYNAVKDD (148 aa). Residues 569–955 are carbamoyl phosphate synthetic domain; that stretch reads VTFGDNGIMV…SYWVALQGLM (387 aa). An ATP-grasp 2 domain is found at 693 to 888; it reads STILDTLGLD…FVEIAVKAFL (196 aa). The ATP site is built by Arg-729, Lys-768, Ile-770, Glu-775, Gly-800, Val-801, His-802, Ser-803, Gln-843, and Glu-859. Mg(2+) is bound by residues Gln-843, Glu-859, and Asn-861. Mn(2+)-binding residues include Gln-843, Glu-859, and Asn-861. The segment at 956–1097 is allosteric domain; that stretch reads SFCVPLPPSG…EMRQSDGPET (142 aa). The MGS-like domain occupies 957-1113; the sequence is FCVPLPPSGI…WREYLGFKPT (157 aa).

Belongs to the CarB family. In terms of assembly, heterodimer composed of 2 chains; the small (or glutamine) chain promotes the hydrolysis of glutamine to ammonia, which is used by the large (or ammonia) chain to synthesize carbamoyl phosphate. Requires Mg(2+) as cofactor. The cofactor is Mn(2+).

Its subcellular location is the cytoplasm. It catalyses the reaction hydrogencarbonate + L-glutamine + 2 ATP + H2O = carbamoyl phosphate + L-glutamate + 2 ADP + phosphate + 2 H(+). The enzyme catalyses hydrogencarbonate + NH4(+) + 2 ATP = carbamoyl phosphate + 2 ADP + phosphate + 2 H(+). The protein operates within amino-acid biosynthesis; L-arginine biosynthesis; carbamoyl phosphate from bicarbonate: step 1/1. Its function is as follows. Large subunit of the arginine-specific carbamoyl phosphate synthase (CPSase). CPSase catalyzes the formation of carbamoyl phosphate from the ammonia moiety of glutamine, hydrogencarbonate, and phosphate donated by ATP, constituting the first step of 2 biosynthetic pathways, one leading to arginine and/or urea and the other to pyrimidine nucleotides. The large subunit (synthetase) binds the substrates ammonia (free or transferred from glutamine from the small subunit), hydrogencarbonate and ATP and carries out an ATP-coupled ligase reaction, activating hydrogencarbonate by forming carboxy phosphate which reacts with ammonia to form carbamoyl phosphate. This is Carbamoyl phosphate synthase arginine-specific large chain (CPA2) from Eremothecium gossypii (strain ATCC 10895 / CBS 109.51 / FGSC 9923 / NRRL Y-1056) (Yeast).